A 474-amino-acid polypeptide reads, in one-letter code: PTS system sucrose-specific EIIBC component (474 aa).

The 84-residue stretch at 4 to 87 (SQIAQQVIDK…SKLLGIGDMT (84 aa)) folds into the PTS EIIB type-1 domain. Cys26 acts as the Phosphocysteine intermediate; for EIIB activity in catalysis. A PTS EIIC type-1 domain is found at 107–474 (KGLADIFVPI…LGKRAQLKAE (368 aa)). 10 consecutive transmembrane segments (helical) span residues 109-129 (LADI…LMGI), 158-178 (FINT…GFSA), 182-202 (FGGN…PALS), 229-249 (VGYQ…ATLE), 264-284 (ITPL…IGPI), 303-323 (LGFV…ITGM), 345-365 (FIFP…LGAA), 376-396 (IAVP…MFGV), 403-423 (PFIS…LFNV), and 444-464 (LAMY…LTVI).

It localises to the cell inner membrane. It carries out the reaction N(pros)-phospho-L-histidyl-[protein](out) + sucrose = sucrose 6(G)-phosphate(in) + L-histidyl-[protein]. Its function is as follows. The phosphoenolpyruvate-dependent sugar phosphotransferase system (sugar PTS), a major carbohydrate active transport system, catalyzes the phosphorylation of incoming sugar substrates concomitantly with their translocation across the cell membrane. This system is involved in sucrose transport. The chain is PTS system sucrose-specific EIIBC component (scrA) from Pasteurella multocida (strain Pm70).